The sequence spans 1906 residues: Replicase polyprotein (1906 aa).

In terms of domain architecture, SF3 helicase spans 513–692 (MRYLTEVFKS…DEFTKMCWSK (180 aa)). An ATP-binding site is contributed by 544 to 551 (GESGRGKS). The protease stretch occupies residues 1124–1350 (KDQVAQKLIT…KDLIRAFSKI (227 aa)). The Peptidase C3 domain maps to 1126 to 1343 (QVAQKLITNR…YAESISQKDL (218 aa)). Active-site for picornain 3C-like protease activity residues include His-1171, Glu-1213, and Cys-1305. Positions 1638 to 1772 (PKVIAGDFST…NFSDEVSEWF (135 aa)) constitute a RdRp catalytic domain.

Specific enzymatic cleavages in vivo by the viral protease yield a variety of precursors and mature proteins.

It carries out the reaction RNA(n) + a ribonucleoside 5'-triphosphate = RNA(n+1) + diphosphate. In terms of biological role, replicase polyprotein contains helicase, VPg, protease and RNA-directed RNA polymerase functions. RNA-directed RNA polymerase replicates genomic and antigenomic RNA and transcribes the vial genome. Functionally, the protease generates mature viral proteins from the precursor polyprotein. Its function is as follows. VPg is covalently linked to the 5'-end of genomic RNA. The polypeptide is Replicase polyprotein (Apis mellifera (Honeybee)).